The following is a 360-amino-acid chain: Lactosylceramide 4-alpha-galactosyltransferase (360 aa).

The Cytoplasmic segment spans residues 1 to 30; sequence MGISRSDLEETMSKPPDCLPRMLRGTPRQR. Residues 31-51 form a helical; Signal-anchor for type II membrane protein membrane-spanning segment; it reads VFTLFIISFKFTFLVSILIYW. Residues 52–360 lie on the Lumenal side of the membrane; it reads HTVGAPKDQR…TTHRAMTMYL (309 aa). The DXD motif signature appears at 199–201; the sequence is DTD. Asn-210 and Asn-316 each carry an N-linked (GlcNAc...) asparagine glycan.

The protein belongs to the glycosyltransferase 32 family. As to expression, ubiquitous. Highly expressed in kidney, mesenteric lymph node, spleen and brain.

The protein localises to the golgi apparatus membrane. It catalyses the reaction a beta-D-Gal-(1-&gt;4)-beta-D-Glc-(1&lt;-&gt;1)-Cer(d18:1(4E)) + UDP-alpha-D-galactose = a globoside Gb3Cer (d18:1(4E)) + UDP + H(+). The enzyme catalyses a beta-D-Gal-(1&lt;-&gt;1')-ceramide + UDP-alpha-D-galactose = alpha-D-Gal-(1-&gt;4)-beta-D-Gal-(1&lt;-&gt;1')-Cer + UDP + H(+). It functions in the pathway glycolipid biosynthesis. In terms of biological role, catalyzes the transfer of galactose from UDP-alpha-D-galactose to lactosylceramide/beta-D-galactosyl-(1-&gt;4)-beta-D-glucosyl-(1&lt;-&gt;1)-ceramide(d18:1(4E)) to produce globotriaosylceramide/globoside Gb3Cer (d18:1(4E)). Also able to transfer galactose to galactosylceramide/beta-D-Gal-(1&lt;-&gt;1')-Cer. Globoside Gb3Cer is a glycosphingolipid of the globo serie, one of the major types of neutral root structures of glycosphingolipids, that constitute a significant portion of mammalian cell membranes. The sequence is that of Lactosylceramide 4-alpha-galactosyltransferase from Rattus norvegicus (Rat).